Reading from the N-terminus, the 299-residue chain is DNA repair protein RecO (299 aa).

Residues 1–62 (MTLNSDADPD…GRRAPRTPAS (62 aa)) form a disordered region. The segment covering 25 to 41 (ASKPARSTRKSSSAKSA) has biased composition (low complexity).

The protein belongs to the RecO family.

Involved in DNA repair and RecF pathway recombination. The sequence is that of DNA repair protein RecO from Paraburkholderia xenovorans (strain LB400).